The primary structure comprises 131 residues: Leptin receptor overlapping transcript-like 1 (131 aa).

4 helical membrane passes run 7-27 (LISLSFGGAIGLMFLMLGCAL), 32-52 (KYWPLFVLFFYILSPIPYCIA), 69-89 (LAIFLTTGIVVSAFGLPIVFA), and 100-120 (ALVLTGNTVIFATILGFFLVF).

The protein belongs to the OB-RGRP/VPS55 family. Interacts with RAB13. Widely expressed, with highest expression in heart, testis, adrenal gland, thymus, and spleen, and lowest expression in lung and skeletal muscle.

The protein localises to the membrane. Its function is as follows. Negatively regulates growth hormone (GH) receptor cell surface expression in liver. May play a role in liver resistance to GH during periods of reduced nutrient availability. The protein is Leptin receptor overlapping transcript-like 1 (LEPROTL1) of Homo sapiens (Human).